The sequence spans 711 residues: MEADGAAAAAAAGEASTEAGARPLAPEEEALRRNTDCVYFLASPLTCKKGNECDFRHSDNARMNPRDCWYWLNSNCLNPKCPFRHPPIDGMFGAPTTGMPAVSSHYAPFNSGKQLVPCYYFKKGNCLKGDRCAFYHGPQSVGNNPSEQVVKVSSLPLEQLQTQKNDLLGIKDSVQSTNSIQHGAPITNERGKTAVDRSTVNSARTATVAIPVASNAMSCPKSEKVKSSTPAALKESFTTSSGGDHPECYQNHFPMDSDPVRDWNQSYEMPPADDLPQNSREADELLGESSPGFDVLVDNDADGAAYLHDEDFGGDMYPVEDYEYAPADFDVRAHHERERFNGMDEQDQMGHMYDGYERKRRRSSERSMERPFHSERRFLQRDRDRVEMDGSDLRHRLRRRRINESSLAISPERNGEQRRRDERYRERAHGHRSHRDHHQSSRGSTLSSRLQGRIKLPGRSPDRVDTRSEKERDRRRLRDRLSPVRRTEFQGTRHREAGQHEEQTQRRSSELALGSRNADGQHLTKDVPDSHNFPHRKNSRDSSKANGSVEPEASLDFEGPKPLSVILQRKREAAWANGTSACSPKQDKSAEVSHRQASLAEAEKEGDNIISSDEYKSGSGDEEFRDEGHIPVEGHGQSSSHGDKLEAEDIIEVDPVENQDADNYDQREGESYYEPIEGQDYKSDDENAYEDDDEEYDDDDDFARKVGVVFS.

The segment covering 1 to 21 has biased composition (low complexity); it reads MEADGAAAAAAAGEASTEAGA. A disordered region spans residues 1 to 23; sequence MEADGAAAAAAAGEASTEAGARP. C3H1-type zinc fingers lie at residues 31–60, 62–88, and 112–139; these read LRRNTDCVYFLASPLTCKKGNECDFRHSDN, RMNPRDCWYWLNSNCLNPKCPFRHPPI, and GKQLVPCYYFKKGNCLKGDRCAFYHGPQ. Disordered regions lie at residues 221–246, 339–376, 405–561, and 573–701; these read KSEKVKSSTPAALKESFTTSSGGDHP, RFNGMDEQDQMGHMYDGYERKRRRSSERSMERPFHSER, SSLA…EGPK, and AAWA…DDDD. 2 stretches are compositionally biased toward basic and acidic residues: residues 364–376 and 413–427; these read SERSMERPFHSER and RNGEQRRRDERYRER. Residues 428 to 437 are compositionally biased toward basic residues; sequence AHGHRSHRDH. Basic and acidic residues-rich tracts occupy residues 460–509 and 585–594; these read SPDR…RRSS and KQDKSAEVSH. 2 stretches are compositionally biased toward acidic residues: residues 648–663 and 686–701; these read EDIIEVDPVENQDADN and ENAYEDDDEEYDDDDD.

In Oryza sativa subsp. japonica (Rice), this protein is Zinc finger CCCH domain-containing protein 32.